A 188-amino-acid chain; its full sequence is Large ribosomal subunit protein eL18 (188 aa).

The tract at residues 153–188 (GKAPGTPHSHTKPYVRSKGRKFERARGRRASCGYKN) is disordered. The segment covering 161-171 (SHTKPYVRSKG) has biased composition (basic residues).

The protein belongs to the eukaryotic ribosomal protein eL18 family. In terms of assembly, component of the large ribosomal subunit.

It is found in the cytoplasm. The protein localises to the cytosol. The protein resides in the rough endoplasmic reticulum. Its function is as follows. Component of the large ribosomal subunit. The ribosome is a large ribonucleoprotein complex responsible for the synthesis of proteins in the cell. The protein is Large ribosomal subunit protein eL18 (rpl18) of Oreochromis mossambicus (Mozambique tilapia).